Here is a 122-residue protein sequence, read N- to C-terminus: Large ribosomal subunit protein uL14 (122 aa).

This sequence belongs to the universal ribosomal protein uL14 family. As to quaternary structure, part of the 50S ribosomal subunit. Forms a cluster with proteins L3 and L19. In the 70S ribosome, L14 and L19 interact and together make contacts with the 16S rRNA in bridges B5 and B8.

Its function is as follows. Binds to 23S rRNA. Forms part of two intersubunit bridges in the 70S ribosome. The chain is Large ribosomal subunit protein uL14 from Chlorobium phaeovibrioides (strain DSM 265 / 1930) (Prosthecochloris vibrioformis (strain DSM 265)).